The primary structure comprises 316 residues: D-alanine--D-alanine ligase (316 aa).

The 200-residue stretch at 104 to 303 (KRVWLQHGLP…YADLCVAILA (200 aa)) folds into the ATP-grasp domain. 130-185 (PDRLGLPLILKPPHEGSTVGITKVAGYSDMKAAYELAARFDAEVLAEQFITGRELT) serves as a coordination point for ATP. The Mg(2+) site is built by aspartate 257, glutamate 270, and asparagine 272.

This sequence belongs to the D-alanine--D-alanine ligase family. The cofactor is Mg(2+). Requires Mn(2+) as cofactor.

It is found in the cytoplasm. The enzyme catalyses 2 D-alanine + ATP = D-alanyl-D-alanine + ADP + phosphate + H(+). Its pathway is cell wall biogenesis; peptidoglycan biosynthesis. Its function is as follows. Cell wall formation. This is D-alanine--D-alanine ligase from Bordetella parapertussis (strain 12822 / ATCC BAA-587 / NCTC 13253).